Here is a 539-residue protein sequence, read N- to C-terminus: Glucose-6-phosphate isomerase (539 aa).

Glutamate 349 functions as the Proton donor in the catalytic mechanism. Residues histidine 380 and lysine 508 contribute to the active site.

This sequence belongs to the GPI family.

It localises to the cytoplasm. It carries out the reaction alpha-D-glucose 6-phosphate = beta-D-fructose 6-phosphate. Its pathway is carbohydrate biosynthesis; gluconeogenesis. The protein operates within carbohydrate degradation; glycolysis; D-glyceraldehyde 3-phosphate and glycerone phosphate from D-glucose: step 2/4. Catalyzes the reversible isomerization of glucose-6-phosphate to fructose-6-phosphate. The chain is Glucose-6-phosphate isomerase from Caulobacter sp. (strain K31).